A 277-amino-acid chain; its full sequence is Hemin import ATP-binding protein HmuV (277 aa).

The region spanning 25 to 260 (IHAQGLNLIL…DIIERVYGWP (236 aa)) is the ABC transporter domain. 57 to 64 (GPNGAGKS) lines the ATP pocket.

It belongs to the ABC transporter superfamily. Heme (hemin) importer (TC 3.A.1.14.5) family. In terms of assembly, the complex is composed of two ATP-binding proteins (HmuV), two transmembrane proteins (HmuU) and a solute-binding protein (HmuT).

It is found in the cell inner membrane. In terms of biological role, part of the ABC transporter complex HmuTUV involved in hemin import. Responsible for energy coupling to the transport system. In Photobacterium profundum (strain SS9), this protein is Hemin import ATP-binding protein HmuV.